The following is a 156-amino-acid chain: Small ribosomal subunit protein uS7 (156 aa).

This sequence belongs to the universal ribosomal protein uS7 family. Part of the 30S ribosomal subunit. Contacts proteins S9 and S11.

Functionally, one of the primary rRNA binding proteins, it binds directly to 16S rRNA where it nucleates assembly of the head domain of the 30S subunit. Is located at the subunit interface close to the decoding center, probably blocks exit of the E-site tRNA. The sequence is that of Small ribosomal subunit protein uS7 from Pseudoalteromonas translucida (strain TAC 125).